The primary structure comprises 90 residues: Probable Fe(2+)-trafficking protein (90 aa).

Belongs to the Fe(2+)-trafficking protein family.

Its function is as follows. Could be a mediator in iron transactions between iron acquisition and iron-requiring processes, such as synthesis and/or repair of Fe-S clusters in biosynthetic enzymes. The chain is Probable Fe(2+)-trafficking protein from Verminephrobacter eiseniae (strain EF01-2).